A 149-amino-acid polypeptide reads, in one-letter code: D-aminoacyl-tRNA deacylase (149 aa).

Positions 141–142 match the Gly-cisPro motif, important for rejection of L-amino acids motif; it reads GP.

It belongs to the DTD family. In terms of assembly, homodimer.

It is found in the cytoplasm. It catalyses the reaction glycyl-tRNA(Ala) + H2O = tRNA(Ala) + glycine + H(+). The enzyme catalyses a D-aminoacyl-tRNA + H2O = a tRNA + a D-alpha-amino acid + H(+). An aminoacyl-tRNA editing enzyme that deacylates mischarged D-aminoacyl-tRNAs. Also deacylates mischarged glycyl-tRNA(Ala), protecting cells against glycine mischarging by AlaRS. Acts via tRNA-based rather than protein-based catalysis; rejects L-amino acids rather than detecting D-amino acids in the active site. By recycling D-aminoacyl-tRNA to D-amino acids and free tRNA molecules, this enzyme counteracts the toxicity associated with the formation of D-aminoacyl-tRNA entities in vivo and helps enforce protein L-homochirality. In Hydrogenovibrio crunogenus (strain DSM 25203 / XCL-2) (Thiomicrospira crunogena), this protein is D-aminoacyl-tRNA deacylase.